The sequence spans 450 residues: N-lysine methyltransferase SETD6 (450 aa).

Residues Met-1–Val-10 show a composition bias toward basic residues. The tract at residues Met-1–Pro-20 is disordered. The SET domain occupies Pro-39–Gly-263. An N6-methylated lysine; by autocatalysis modification is found at Lys-40. Ala-50–Tyr-52 provides a ligand contact to S-adenosyl-L-methionine. Trp-99 provides a ligand contact to substrate. Lys-156 carries the post-translational modification N6-methylated lysine; by autocatalysis. Tyr-200 serves as a coordination point for S-adenosyl-L-methionine. Substrate is bound by residues Ser-201 and Gln-203. Residues Asn-228–His-229 and Tyr-274 each bind S-adenosyl-L-methionine. At Lys-349 the chain carries N6-methylated lysine; by autocatalysis.

It belongs to the class V-like SAM-binding methyltransferase superfamily. Histone-lysine methyltransferase family. SETD6 subfamily. As to quaternary structure, monomer, homodimer and homotrimer; these structures are stabilized in the presence of S-adenosyl-L-methionine (SAM). Automethylated.

It localises to the nucleus. The enzyme catalyses L-lysyl-[protein] + S-adenosyl-L-methionine = N(6)-methyl-L-lysyl-[protein] + S-adenosyl-L-homocysteine + H(+). It catalyses the reaction L-lysyl(8)-[histone H2AZ] + S-adenosyl-L-methionine = N(6)-methyl-L-lysyl(8)-[histone H2AZ] + S-adenosyl-L-homocysteine + H(+). Protein-lysine N-methyltransferase. Monomethylates 'Lys-310' of the RELA subunit of NF-kappa-B complex, leading to down-regulation of NF-kappa-B transcription factor activity. Monomethylates 'Lys-8' of H2AZ (H2AZK8me1). Required for the maintenance of embryonic stem cell self-renewal. Methylates PAK4. The chain is N-lysine methyltransferase SETD6 (SETD6) from Bos taurus (Bovine).